The sequence spans 194 residues: Peptidyl-tRNA hydrolase (194 aa).

Y17 contacts tRNA. H22 (proton acceptor) is an active-site residue. Positions 68, 70, and 116 each coordinate tRNA.

It belongs to the PTH family. Monomer.

It localises to the cytoplasm. It carries out the reaction an N-acyl-L-alpha-aminoacyl-tRNA + H2O = an N-acyl-L-amino acid + a tRNA + H(+). In terms of biological role, hydrolyzes ribosome-free peptidyl-tRNAs (with 1 or more amino acids incorporated), which drop off the ribosome during protein synthesis, or as a result of ribosome stalling. Functionally, catalyzes the release of premature peptidyl moieties from peptidyl-tRNA molecules trapped in stalled 50S ribosomal subunits, and thus maintains levels of free tRNAs and 50S ribosomes. This Shewanella woodyi (strain ATCC 51908 / MS32) protein is Peptidyl-tRNA hydrolase.